Reading from the N-terminus, the 125-residue chain is Phosphoribosyl-AMP cyclohydrolase (125 aa).

Residue Asp-74 participates in Mg(2+) binding. Cys-75 is a Zn(2+) binding site. Residues Asp-76 and Asp-78 each coordinate Mg(2+). Cys-92 and Cys-99 together coordinate Zn(2+).

The protein belongs to the PRA-CH family. In terms of assembly, homodimer. Requires Mg(2+) as cofactor. It depends on Zn(2+) as a cofactor.

Its subcellular location is the cytoplasm. It catalyses the reaction 1-(5-phospho-beta-D-ribosyl)-5'-AMP + H2O = 1-(5-phospho-beta-D-ribosyl)-5-[(5-phospho-beta-D-ribosylamino)methylideneamino]imidazole-4-carboxamide. It participates in amino-acid biosynthesis; L-histidine biosynthesis; L-histidine from 5-phospho-alpha-D-ribose 1-diphosphate: step 3/9. In terms of biological role, catalyzes the hydrolysis of the adenine ring of phosphoribosyl-AMP. This chain is Phosphoribosyl-AMP cyclohydrolase, found in Pelobacter propionicus (strain DSM 2379 / NBRC 103807 / OttBd1).